Here is an 897-residue protein sequence, read N- to C-terminus: Major intrinsically disordered Notch2-binding receptor 1 (897 aa).

At 1–872 (MDAMPEYSLF…AEFRRAKACK (872 aa)) the chain is on the cytoplasmic side. Disordered stretches follow at residues 405-433 (AKDKPTASPSGFSKKSNGSKTKDMSSVAC), 450-502 (SINC…EDSE), and 688-766 (TRRS…PPKD). Polar residues-rich tracts occupy residues 411–423 (ASPSGFSKKSNGS) and 452–471 (NCPSFQSSNVDNGMSVGTQT). The segment covering 472 to 498 (EQHESRKVKDYPSQNKFKERPPFKHSE) has biased composition (basic and acidic residues). Positions 697–724 (EENSATESKVASITNSPRDWRTVSYSSH) are enriched in polar residues. Positions 725-756 (NGEEGKERDRHSEGKERHRKSREAERQYEAHQ) are enriched in basic and acidic residues. A helical transmembrane segment spans residues 873 to 893 (IGALIFAAACTVILVIVVPIC). Over 894 to 897 (TMKS) the chain is Extracellular.

Belongs to the MINAR family.

It localises to the cell membrane. Functionally, intrinsically disordered protein which may negatively regulate mTOR signaling pathway by stabilizing the mTOR complex component DEPTOR. Negatively regulates angiogenesis. Negatively regulates cell growth. May play a role in neuronal development. In Danio rerio (Zebrafish), this protein is Major intrinsically disordered Notch2-binding receptor 1 (minar1).